The sequence spans 931 residues: Bifunctional glutamine synthetase adenylyltransferase/adenylyl-removing enzyme (931 aa).

Positions 1–434 are adenylyl removase; that stretch reads MTLAPADLPA…STEFAALLAP (434 aa). The tract at residues 441–931 is adenylyl transferase; it reads PDALANYWRS…ACIAAELPFA (491 aa).

Belongs to the GlnE family. It depends on Mg(2+) as a cofactor.

The enzyme catalyses [glutamine synthetase]-O(4)-(5'-adenylyl)-L-tyrosine + phosphate = [glutamine synthetase]-L-tyrosine + ADP. It catalyses the reaction [glutamine synthetase]-L-tyrosine + ATP = [glutamine synthetase]-O(4)-(5'-adenylyl)-L-tyrosine + diphosphate. Involved in the regulation of glutamine synthetase GlnA, a key enzyme in the process to assimilate ammonia. When cellular nitrogen levels are high, the C-terminal adenylyl transferase (AT) inactivates GlnA by covalent transfer of an adenylyl group from ATP to specific tyrosine residue of GlnA, thus reducing its activity. Conversely, when nitrogen levels are low, the N-terminal adenylyl removase (AR) activates GlnA by removing the adenylyl group by phosphorolysis, increasing its activity. The regulatory region of GlnE binds the signal transduction protein PII (GlnB) which indicates the nitrogen status of the cell. The protein is Bifunctional glutamine synthetase adenylyltransferase/adenylyl-removing enzyme of Stenotrophomonas maltophilia (strain R551-3).